A 292-amino-acid chain; its full sequence is Cyclic dipurine nucleotide synthase (292 aa).

Gln47 contributes to the ATP binding site. 48–52 (GSYRN) provides a ligand contact to GTP. Positions 61 and 63 each coordinate Mg(2+). Residues Asp63, 121-122 (NK), and Asp136 contribute to the ATP site. A Mg(2+)-binding site is contributed by Asp136. GTP-binding residues include Lys197 and Ser216.

This sequence belongs to the CD-NTase family. E01 subfamily. Requires Mg(2+) as cofactor.

The enzyme catalyses 2 ATP = 3',3'-c-di-AMP + 2 diphosphate. It catalyses the reaction 2 GTP = 3',3'-c-di-GMP + 2 diphosphate. It carries out the reaction GTP + ATP = 3',3'-cGAMP + 2 diphosphate. Its function is as follows. Cyclic nucleotide synthase (second messenger synthase) of a CBASS antivirus system. CBASS (cyclic oligonucleotide-based antiphage signaling system) provides immunity against bacteriophage. The CD-NTase protein synthesizes cyclic nucleotides in response to infection; these serve as specific second messenger signals. The signals activate a diverse range of effectors, leading to bacterial cell death and thus abortive phage infection. A type I-A(GA) CBASS system. In terms of biological role, cyclic dinucleotide synthase that catalyzes the synthesis of 3'3'-cyclic GMP-AMP (cGAMP) from GTP and ATP, and of c-di-AMP and c-di-GMP, that are second messengers for cell signal transduction. This is Cyclic dipurine nucleotide synthase from Elizabethkingia meningoseptica (Chryseobacterium meningosepticum).